The chain runs to 717 residues: MASSSDSEDDSFMAVDQEETVLEGTMEQDEEPHPVLEAEETRHNRSMSELPEEVLEYILSFLSPYQEHKTAALVCKQWYRLIKGVAHQCYHGFVKAVQEGNIQWESRTYPYPGTPITQRFSHSACYYDANQSMYVFGGCTQSSCNAAFNDLWRLDLNSKEWIRPLASGSYPSPKAGATLVVYKDLLVLFGGWTRPSPYPLHQPERFFDEIHTYSPSKNWWNCIVTTHGPPPMAGHSSCVIDDKMIVFGGSLGSRQMSNDVWVLDLEQWAWSKPNISGPSPHPRGGQSQIVIDDATILILGGCGGPNALFKDAWLLHMHSGPWAWQPLKVENEEHGAPELWCHPACRVGQCVVVFSQAPSGRAPLSPSLNSRPSPISATPPALVPETREYRSQSPVRSMDEAPCVNGRWGTLRPRAQRQTPSGSREGSLSPARGDGSPILNGGSLSPGTAAVGGSSLDSPVQAISPSTPSAAEGYDLKIGLSLAPRRGSLPDQKDLRLGSVDLNWDLKPASSSNPMDGMDNRTVGGSMRHPPEQTNGVHTPPHVASALAGAVSPGALRRSLEAIKAMSSKGPSASAALSPPLGSSPGSPGSQSLSSGETVPIPRPGPAQGDGHSLPPIARRLGRHPPQSLNVGKPLYQSMNCKPMQMYVLDIKDTKEKGRVKWKVFNSSSVVGPPETSLHTVVQGRGELIIFGGLMDKKQNVKYYPKTNALYFVRAKR.

The segment covering 1 to 30 (MASSSDSEDDSFMAVDQEETVLEGTMEQDE) has biased composition (acidic residues). The disordered stretch occupies residues 1 to 47 (MASSSDSEDDSFMAVDQEETVLEGTMEQDEEPHPVLEAEETRHNRSM). The span at 31-43 (EPHPVLEAEETRH) shows a compositional bias: basic and acidic residues. In terms of domain architecture, F-box spans 44-93 (NRSMSELPEEVLEYILSFLSPYQEHKTAALVCKQWYRLIKGVAHQCYHGF). Kelch repeat units lie at residues 132–184 (SMYV…VYKD), 186–242 (LVLF…VIDD), 244–293 (MIVF…VIDD), and 295–342 (TILI…LWCH). Disordered stretches follow at residues 361-472 (RAPL…SAAE) and 508-539 (PASSSNPMDGMDNRTVGGSMRHPPEQTNGVHT). The segment covering 363 to 376 (PLSPSLNSRPSPIS) has biased composition (low complexity). Residues Ser365 and Ser373 each carry the phosphoserine modification. The residue at position 378 (Thr378) is a Phosphothreonine. Polar residues-rich tracts occupy residues 416 to 426 (QRQTPSGSREG) and 455 to 469 (SLDSPVQAISPSTPS). Ser552 is subject to Phosphoserine. Residues 570 to 596 (GPSASAALSPPLGSSPGSPGSQSLSSG) are compositionally biased toward low complexity. A disordered region spans residues 570 to 635 (GPSASAALSP…PQSLNVGKPL (66 aa)).

In terms of assembly, component of some SCF complex, composed of CUL1, SKP1, RBX1 and FBXO42. Interacts (via the kelch domain) with p53/TP53; interaction is direct.

Functionally, substrate-recognition component of some SCF (SKP1-CUL1-F-box protein)-type E3 ubiquitin ligase complex. Specifically recognizes p53/TP53, promoting its ubiquitination and degradation. This Pongo abelii (Sumatran orangutan) protein is F-box only protein 42 (FBXO42).